The following is a 198-amino-acid chain: Endoribonuclease YbeY (198 aa).

Residues His156, His160, and His166 each coordinate Zn(2+).

Belongs to the endoribonuclease YbeY family. Zn(2+) serves as cofactor.

The protein localises to the cytoplasm. Single strand-specific metallo-endoribonuclease involved in late-stage 70S ribosome quality control and in maturation of the 3' terminus of the 16S rRNA. This Cupriavidus necator (strain ATCC 17699 / DSM 428 / KCTC 22496 / NCIMB 10442 / H16 / Stanier 337) (Ralstonia eutropha) protein is Endoribonuclease YbeY.